The primary structure comprises 103 residues: MHKDELIQLHQLLIYLRKYIEKKYNCDNNEFKEYDELNIYPHHIHRTKAEHIYTIFLLSSIIAKILSDNGKIPRSVSNLLRVSGEKIKKEIQRKRCKIKNTNT.

The protein belongs to the UPF0058 family.

This chain is UPF0058 protein MJ1205, found in Methanocaldococcus jannaschii (strain ATCC 43067 / DSM 2661 / JAL-1 / JCM 10045 / NBRC 100440) (Methanococcus jannaschii).